The chain runs to 183 residues: Outer membrane protein H.8 (183 aa).

Positions 1–17 (MKAYLALISAAVIGLAA) are cleaved as a signal peptide. A lipid anchor (N-palmitoyl cysteine) is attached at Cys-18. Cys-18 carries the S-diacylglycerol cysteine lipid modification. Residues 27–51 (AEATPAGEAPASEAPAAEAAPADAA) form a disordered region. Residues 57-183 (GNCAATVESN…LMNGKVTLVD (127 aa)) form the Plastocyanin-like domain. The Cu cation site is built by His-102, Cys-166, His-171, and Met-175.

Cu cation serves as cofactor.

It localises to the cell outer membrane. This chain is Outer membrane protein H.8, found in Neisseria gonorrhoeae.